Reading from the N-terminus, the 191-residue chain is ATP synthase subunit b 2 (191 aa).

The span at 1–12 (MAESHGEAKGGE) shows a compositional bias: basic and acidic residues. Residues 1-31 (MAESHGEAKGGEAKGTASAHTEAEGGHGFPP) form a disordered region. A helical membrane pass occupies residues 38 to 60 (PSQIASLVIAFVALYVIVSRVAL).

This sequence belongs to the ATPase B chain family. As to quaternary structure, F-type ATPases have 2 components, F(1) - the catalytic core - and F(0) - the membrane proton channel. F(1) has five subunits: alpha(3), beta(3), gamma(1), delta(1), epsilon(1). F(0) has three main subunits: a(1), b(2) and c(10-14). The alpha and beta chains form an alternating ring which encloses part of the gamma chain. F(1) is attached to F(0) by a central stalk formed by the gamma and epsilon chains, while a peripheral stalk is formed by the delta and b chains.

It is found in the cell inner membrane. Functionally, f(1)F(0) ATP synthase produces ATP from ADP in the presence of a proton or sodium gradient. F-type ATPases consist of two structural domains, F(1) containing the extramembraneous catalytic core and F(0) containing the membrane proton channel, linked together by a central stalk and a peripheral stalk. During catalysis, ATP synthesis in the catalytic domain of F(1) is coupled via a rotary mechanism of the central stalk subunits to proton translocation. In terms of biological role, component of the F(0) channel, it forms part of the peripheral stalk, linking F(1) to F(0). The b'-subunit is a diverged and duplicated form of b found in plants and photosynthetic bacteria. This chain is ATP synthase subunit b 2 (atpF2), found in Bradyrhizobium sp. (strain ORS 278).